Reading from the N-terminus, the 434-residue chain is UPF0053 protein YrkA (434 aa).

Residues 1-201 form the CNNM transmembrane domain; that stretch reads MTTINLIIFT…YKSGEINQNE (201 aa). The next 3 membrane-spanning stretches (helical) occupy residues 7 to 27, 64 to 84, and 101 to 121; these read IIFTLLIVLTAFFVATEFAIV, LGITVTALGIGWVGESTFEVI, and VLILVIAFVMATFLHVVVGEL. CBS domains lie at 220–282 and 289–346; these read MIPR…KIKE and HINP…IRDE.

This sequence belongs to the UPF0053 family.

It is found in the cell membrane. In Bacillus subtilis (strain 168), this protein is UPF0053 protein YrkA (yrkA).